A 505-amino-acid polypeptide reads, in one-letter code: uncharacterized protein (505 aa).

The span at 1–16 (MPPTASLTRSPPTASQ) shows a compositional bias: polar residues. The segment at 1-474 (MPPTASLTRS…TPPTASLTRT (474 aa)) is disordered. 2 stretches are compositionally biased toward low complexity: residues 17–33 (TRTL…PRAS) and 40–59 (TASL…PPRA). Positions 66–78 (SRASLTRTLSRAS) are enriched in polar residues. 3 stretches are compositionally biased toward low complexity: residues 96–122 (SLTR…PPRT), 129–140 (PRTSQTRTPPRA), and 147–158 (SRASRTRTPPRA). Polar residues-rich tracts occupy residues 165-177 (SRAS…SRAS) and 188-200 (TRTP…TRTP). Low complexity predominate over residues 201–226 (PTASLTRASRTRTPPRTSQTRTPPRA). Polar residues-rich tracts occupy residues 233-254 (SRAS…SRAS), 265-293 (TRTP…SLTR), 309-329 (LTRT…SLTR), 345-365 (LTRT…SLTR), 373-383 (TRTPSRASLTR), 399-408 (LTRSPPTASL), and 435-448 (LTRS…TRTP). A compositionally biased stretch (low complexity) spans 453–474 (LRRTPPRTSLTRTPPTASLTRT).

This is an uncharacterized protein from Homo sapiens (Human).